A 347-amino-acid polypeptide reads, in one-letter code: MATQAAPASGVRNGAGPEWGGFEENIQGGGSAVIDMENMDDTSGSSFEDMGELHQRLREEEVDADAAAAEEEDGEFLGMKGFKGQLSRQVADQMWQAGKRQASKAFSLYANIDILRPYFDVEPAQVRSRLLESMIPIKMVNFPQKVAGELYGPLMLVFTLVAILLHGMKTSDTIIREGTLMGTAIGTCFGYWLGVSSFIYFLAYLCNAQITMLQMLALLGYGLFGHCIVLFITYNIHLHALFYLFWLLLGGLSTLRMVAVLVSRTVGPTQRLLLCGTLAALHMLFLLYLHFAYHKVVEGILDTLEGPNIPPMQRVPRDIPAVLPAAKLPVAVVNATAKAIAVTLQSH.

The segment at 1–28 (MATQAAPASGVRNGAGPEWGGFEENIQG) is disordered. Ala-2 is modified (N-acetylalanine). Residues 2-145 (ATQAAPASGV…PIKMVNFPQK (144 aa)) lie on the Cytoplasmic side of the membrane. The helical transmembrane segment at 146–166 (VAGELYGPLMLVFTLVAILLH) threads the bilayer. At 167 to 184 (GMKTSDTIIREGTLMGTA) the chain is on the lumenal side. The chain crosses the membrane as a helical span at residues 185–205 (IGTCFGYWLGVSSFIYFLAYL). At 206-211 (CNAQIT) the chain is on the cytoplasmic side. A helical transmembrane segment spans residues 212-234 (MLQMLALLGYGLFGHCIVLFITY). Residues 235 to 237 (NIH) lie on the Lumenal side of the membrane. The helical transmembrane segment at 238–260 (LHALFYLFWLLLGGLSTLRMVAV) threads the bilayer. Residues 261-271 (LVSRTVGPTQR) are Cytoplasmic-facing. The helical transmembrane segment at 272-292 (LLLCGTLAALHMLFLLYLHFA) threads the bilayer. Residues 293-347 (YHKVVEGILDTLEGPNIPPMQRVPRDIPAVLPAAKLPVAVVNATAKAIAVTLQSH) lie on the Lumenal side of the membrane. N-linked (GlcNAc...) asparagine glycosylation occurs at Asn-334.

Belongs to the YIP1 family. As to quaternary structure, interacts with YIPF4 and YIPF5.

It is found in the cell membrane. It localises to the golgi apparatus. Its subcellular location is the cis-Golgi network membrane. The protein resides in the cytoplasm. In terms of biological role, involved in the maintenance of the Golgi structure. May play a role in hematopoiesis. This Rattus norvegicus (Rat) protein is Protein YIPF3 (Yipf3).